The sequence spans 471 residues: Glutamyl-tRNA(Gln) amidotransferase subunit A (471 aa).

Catalysis depends on charge relay system residues Lys-66 and Ser-141. The Acyl-ester intermediate role is filled by Ser-165.

It belongs to the amidase family. GatA subfamily. In terms of assembly, heterotrimer of A, B and C subunits.

It carries out the reaction L-glutamyl-tRNA(Gln) + L-glutamine + ATP + H2O = L-glutaminyl-tRNA(Gln) + L-glutamate + ADP + phosphate + H(+). Functionally, allows the formation of correctly charged Gln-tRNA(Gln) through the transamidation of misacylated Glu-tRNA(Gln) in organisms which lack glutaminyl-tRNA synthetase. The reaction takes place in the presence of glutamine and ATP through an activated gamma-phospho-Glu-tRNA(Gln). The chain is Glutamyl-tRNA(Gln) amidotransferase subunit A from Thermus thermophilus (strain ATCC BAA-163 / DSM 7039 / HB27).